A 373-amino-acid chain; its full sequence is Cell division protein FtsZ 1 (373 aa).

GTP is bound by residues 51–55, 138–140, glutamate 169, arginine 173, and aspartate 216; these read GAGCN and GTG. The segment at 354–373 is disordered; the sequence is EESYFGEEERRPIKLDLDEL. Residues 360–373 are compositionally biased toward basic and acidic residues; it reads EEERRPIKLDLDEL.

This sequence belongs to the FtsZ family. Homodimer. Polymerizes to form a dynamic ring structure in a strictly GTP-dependent manner. Interacts directly with several other division proteins.

The protein resides in the cytoplasm. Essential cell division protein that forms a contractile ring structure (Z ring) at the future cell division site. The regulation of the ring assembly controls the timing and the location of cell division. One of the functions of the FtsZ ring is to recruit other cell division proteins to the septum to produce a new cell wall between the dividing cells. Binds GTP and shows GTPase activity. In Thermococcus kodakarensis (strain ATCC BAA-918 / JCM 12380 / KOD1) (Pyrococcus kodakaraensis (strain KOD1)), this protein is Cell division protein FtsZ 1.